The chain runs to 448 residues: StAR-related lipid transfer protein 3 (448 aa).

Positions 47 to 219 constitute an MENTAL domain; the sequence is FSDVRRTFCL…YSPPESLAGS (173 aa). A run of 4 helical transmembrane segments spans residues 53-73, 96-116, 122-142, and 150-170; these read TFCL…IIEL, FFDI…GYAA, WWVI…KVIL, and AFGY…TWFL. The FFAT motif lies at 208-214; the sequence is QFYSPPE. In terms of domain architecture, START spans 232–445; that stretch reads AVTEQEKAFV…LRQRINEVHV (214 aa).

This sequence belongs to the STARD3 family. As to quaternary structure, homodimer. Post-translationally, phosphorylated. Phosphorylation allows the tethering of two membranes that participates in the formation of ER-endosome contacts. Phosphorylation of FFAT motif drives membrane tethering between the endoplasmic reticulum and late endosomes that in turn allows the efficient transport of sterol mediated by the START domain.

It localises to the late endosome membrane. It carries out the reaction cholesterol(in) = cholesterol(out). Functionally, sterol-binding protein that mediates cholesterol transport from the endoplasmic reticulum to endosomes. The sterol transport mechanism is triggered by phosphorylation of FFAT motif that leads to membrane tethering between the endoplasmic reticulum and late endosomes. Acts as a lipid transfer protein that redirects sterol to the endosome at the expense of the cell membrane and favors membrane formation inside endosomes. In Danio rerio (Zebrafish), this protein is StAR-related lipid transfer protein 3.